Reading from the N-terminus, the 385-residue chain is 1-deoxy-D-xylulose 5-phosphate reductoisomerase (385 aa).

The NADPH site is built by T13, G14, S15, I16, N40, and N122. Residue K123 participates in 1-deoxy-D-xylulose 5-phosphate binding. Residue E124 coordinates NADPH. Mn(2+) is bound at residue D148. Residues S149, E150, S177, and H200 each coordinate 1-deoxy-D-xylulose 5-phosphate. E150 is a binding site for Mn(2+). G206 is an NADPH binding site. 1-deoxy-D-xylulose 5-phosphate is bound by residues S213, N218, K219, and E222. E222 lines the Mn(2+) pocket.

This sequence belongs to the DXR family. It depends on Mg(2+) as a cofactor. Mn(2+) serves as cofactor.

The enzyme catalyses 2-C-methyl-D-erythritol 4-phosphate + NADP(+) = 1-deoxy-D-xylulose 5-phosphate + NADPH + H(+). It participates in isoprenoid biosynthesis; isopentenyl diphosphate biosynthesis via DXP pathway; isopentenyl diphosphate from 1-deoxy-D-xylulose 5-phosphate: step 1/6. Its function is as follows. Catalyzes the NADPH-dependent rearrangement and reduction of 1-deoxy-D-xylulose-5-phosphate (DXP) to 2-C-methyl-D-erythritol 4-phosphate (MEP). This is 1-deoxy-D-xylulose 5-phosphate reductoisomerase from Francisella tularensis subsp. tularensis (strain WY96-3418).